Consider the following 165-residue polypeptide: Large ribosomal subunit protein uL11 (165 aa).

Belongs to the universal ribosomal protein uL11 family.

In terms of biological role, binds directly to 26S ribosomal RNA. This chain is Large ribosomal subunit protein uL11 (rpl-12), found in Caenorhabditis briggsae.